We begin with the raw amino-acid sequence, 241 residues long: Gamma-interferon-inducible lysosomal thiol reductase-like protein (241 aa).

Positions 1–18 (MLFKSLLLLSVYAVTCYG) are cleaved as a signal peptide. Residues asparagine 105 and asparagine 152 are each glycosylated (N-linked (GlcNAc...) asparagine). The helical transmembrane segment at 218-235 (STGSAISSLGMIVTVVAV) threads the bilayer.

Belongs to the GILT family. Salivary gland (at protein level). Low-level expression in midgut (at protein level). Expressed in head and leg tissues. Ovary. Fat body. As to expression, (Microbial infection) Detected with Plasmodium berghei sporozoites isolated from the saliva of infected Anopheles gambiae mosquitoes (at protein level).

The protein resides in the membrane. In terms of biological role, required for normal development of ovary and testis. (Microbial infection) Interacts with the surface of Plasmodium berghei sporozoites. Reduces P.berghei sporozoite cell traversal activity and transmission. Limits the motility of P.berghei sporozoites. Decreases the levels of host liver infection by P.berghei sporozoites. Does not affect P.berghei sporozoite viability. Indirectly promotes P.berghei survival in mosquitoes by influencing ovarian development and the subsequent production of 20-hydroxyecdysone and vitellogenin, which, in turn, modulates TEP1-dependent parasite killing. Promotes P.berghei infection in mosquitoes, most likely impacting the oocyst stage of parasite development. Its function is as follows. (Microbial infection) Promotes Plasmodium falciparum survival in mosquitoes. The polypeptide is Gamma-interferon-inducible lysosomal thiol reductase-like protein (Anopheles gambiae (African malaria mosquito)).